Here is a 396-residue protein sequence, read N- to C-terminus: Succinyl-diaminopimelate desuccinylase (396 aa).

Histidine 74 lines the Zn(2+) pocket. Residue aspartate 76 is part of the active site. Aspartate 107 lines the Zn(2+) pocket. Glutamate 142 acts as the Proton acceptor in catalysis. Zn(2+) is bound by residues glutamate 143, glutamate 171, and histidine 360.

Belongs to the peptidase M20A family. DapE subfamily. In terms of assembly, homodimer. Zn(2+) is required as a cofactor. Co(2+) serves as cofactor.

It carries out the reaction N-succinyl-(2S,6S)-2,6-diaminopimelate + H2O = (2S,6S)-2,6-diaminopimelate + succinate. Its pathway is amino-acid biosynthesis; L-lysine biosynthesis via DAP pathway; LL-2,6-diaminopimelate from (S)-tetrahydrodipicolinate (succinylase route): step 3/3. Its function is as follows. Catalyzes the hydrolysis of N-succinyl-L,L-diaminopimelic acid (SDAP), forming succinate and LL-2,6-diaminopimelate (DAP), an intermediate involved in the bacterial biosynthesis of lysine and meso-diaminopimelic acid, an essential component of bacterial cell walls. In Methylobacterium sp. (strain 4-46), this protein is Succinyl-diaminopimelate desuccinylase.